The following is a 540-amino-acid chain: Probable tubulin polyglutamylase TTLL2 (540 aa).

The region spanning Leu41 to Cys384 is the TTL domain. Residues Lys169, Arg175–Gly176, Gln197–Ile200, and Lys210–Asp212 each bind ATP. Arg175 contacts a protein. L-glutamate is bound at residue Arg236. Residue Thr255–Asn256 participates in ATP binding. Residues Ser258 and Lys278 each coordinate L-glutamate. Positions 330, 343, and 345 each coordinate Mg(2+). Lys361 contributes to the L-glutamate binding site. A disordered region spans residues Ser479 to Thr499.

The protein belongs to the tubulin--tyrosine ligase family. Requires Mg(2+) as cofactor. As to expression, highly expressed in brain, kidney, liver and testis. Expressed in heart, lung, muscle and spleen.

Its function is as follows. Probable tubulin polyglutamylase that generates side chains of glutamate on the gamma-carboxyl group of specific glutamate residues within the C-terminal tail of target proteins. Similar to TTLL1, may acquire enzymatic activity only in complex with other proteins as it is most likely lacking domains important for autonomous activity. Probably involved in the side-chain initiation step of the polyglutamylation reaction rather than the elongation step. This chain is Probable tubulin polyglutamylase TTLL2, found in Mus musculus (Mouse).